Consider the following 350-residue polypeptide: MGSFRCMSPASPSWSGLLELLLCGESLSAAQATDLMQAWLSESLTPVQTGAFLAGLRAKGMEAEELAAMAAVLREACPLPCARPDRFLVDTCGTGGDGADTFNISTAVAFTAAACGVEVAKHGNRSASGKVGSADVLEGLGLNLKAPLQLVVDAIPAAGVTFLFAPAWHPALVNLAPLRRSLGVRTVFNLLGPLVNPLKPQAQVLGVAKKDLLDPMAGALQRLGLERAVVVHGAGGLDEASLAGPNDLRFIEAGAIRSLQLSPDELGLATADLETLKGGDLDCNQTILQQVLQGRGEPAQRDVVALNTALVLWAAGIDTDLSSAAARAAEALDQGLPWTRLETLRQHLAS.

Residues Gly-93, 96–97 (GD), Thr-101, 103–106 (NIST), 121–129 (KHGNRSASG), and Ser-133 each bind 5-phospho-alpha-D-ribose 1-diphosphate. Gly-93 is an anthranilate binding site. Residue Ser-105 coordinates Mg(2+). Position 124 (Asn-124) interacts with anthranilate. Residue Arg-179 participates in anthranilate binding. Residues Asp-238 and Glu-239 each coordinate Mg(2+).

It belongs to the anthranilate phosphoribosyltransferase family. As to quaternary structure, homodimer. Requires Mg(2+) as cofactor.

It carries out the reaction N-(5-phospho-beta-D-ribosyl)anthranilate + diphosphate = 5-phospho-alpha-D-ribose 1-diphosphate + anthranilate. It participates in amino-acid biosynthesis; L-tryptophan biosynthesis; L-tryptophan from chorismate: step 2/5. Its function is as follows. Catalyzes the transfer of the phosphoribosyl group of 5-phosphorylribose-1-pyrophosphate (PRPP) to anthranilate to yield N-(5'-phosphoribosyl)-anthranilate (PRA). The sequence is that of Anthranilate phosphoribosyltransferase from Parasynechococcus marenigrum (strain WH8102).